Reading from the N-terminus, the 334-residue chain is MAGAQESLVLAGVMHGHNDVVTAIATPIDNSPFIVSSSRDKSLLVWDLTNPVQNVGEGAGASEYGVPFRRLTGHSHFVQDVVLSSDGQFALSGSWDGELRLWDLSTGVTTRRFVGHDKDVLSVAFSVDNRQIVSASRDRTIKLWNTLGECKYTIGGDLGGGEGHNGWVSCVRFSPNTFQPTIVSGSWDRTVKVWNLTNCKLRCNLEGHGGYVNAVAVSPDGSLCASGGKDGVTLLWDLAEGKRLYSLDAGSIIHSLCFSPNRYWLCAATQDSIKIWDLESKHIVQDLKPEIPVSKNQMLYCTSLNWSADGSTLYAGYTDGTIRIYKISGFSYAG.

WD repeat units lie at residues glycine 16 to aspartate 47, glycine 73 to aspartate 103, glycine 115 to asparagine 145, glycine 163 to asparagine 195, glycine 207 to aspartate 237, aspartate 248 to aspartate 277, and asparagine 296 to lysine 326.

The protein belongs to the WD repeat G protein beta family. Ribosomal protein RACK1 subfamily. In terms of assembly, interacts with RAC1, RAC3, RAC6, RAR1, SGT1 and RBOHB. Homodimer and heterodimer with RACK1B. In terms of tissue distribution, widely expressed.

The protein localises to the cytoplasm. Its subcellular location is the cell membrane. In terms of biological role, component of the RACK1 regulatory proteins that functions in innate immunity by interacting with multiple proteins in the RAC1 immune complex. Acts as a positive regulator of reactive oxygen species (ROS) production and is required for resistance against rice blast (M.grisea) infection. The chain is Small ribosomal subunit protein RACK1z (RACK1A) from Oryza sativa subsp. japonica (Rice).